The chain runs to 158 residues: Regulator of sigma D (158 aa).

This sequence belongs to the Rsd/AlgQ family. In terms of assembly, interacts with RpoD.

It is found in the cytoplasm. In terms of biological role, binds RpoD and negatively regulates RpoD-mediated transcription activation by preventing the interaction between the primary sigma factor RpoD with the catalytic core of the RNA polymerase and with promoter DNA. May be involved in replacement of the RNA polymerase sigma subunit from RpoD to RpoS during the transition from exponential growth to the stationary phase. This Escherichia fergusonii (strain ATCC 35469 / DSM 13698 / CCUG 18766 / IAM 14443 / JCM 21226 / LMG 7866 / NBRC 102419 / NCTC 12128 / CDC 0568-73) protein is Regulator of sigma D.